Consider the following 634-residue polypeptide: MSVETQKETLGFQTEVKQLLHLMIHSLYSNKEIFLRELISNASDAADKLRFEALANPELLEGGAELKIRVSFDKEANTVTLEDNGIGMSREDVVTHLGTIAKSGTADFLKNLSGDQKKDSHLIGQFGVGFYSAFIVADKVDVYSRRAGQPASEGVHWSSKGEGEFDVATIDKPERGTRIVLHLKKGEEEFADGWRLRNVIKKYSDHIALPIELPKEFHGEEAEKPAEPEWETVNRASALWTRPRAEVKDEEYQEFYKHVAHDFENPLSWSHNKVEGKLEYTSLLYVPGRAPFDLYHREAPRGLKLYVQRVFIMDQADEFLPLYLRFIKGVVDSNDLSLNVSREILQKDPVIDSMKSALTKRVLDMLEKLAKNEPEQYKTFWKNFGQVLKEGPAEDFGNKEKIAGLLRFASTGGDSGEQSVALADYIGRMKEGQDKIYYLTGESYSQVKNSPHLEVFRKKGIEVLLLTDRIDEWLMSYLPDFDGKSFVDVARGDLDLGSLDSEEDKKAQEEVAKSKEGLIERLKKVLDEQASEVRVSHRLTDSPAILAIGEQDLGLQMRQILEASGQKVPESKPIFEINPQHPLIEKLDAEPDEDRFGELSHILFDQAALAAGDSLKDPGAYVRRLNKLLVELSA.

Residues 1–342 form an a; substrate-binding region; that stretch reads MSVETQKETL…SNDLSLNVSR (342 aa). The b stretch occupies residues 343–559; it reads EILQKDPVID…EQDLGLQMRQ (217 aa). Positions 560–634 are c; the sequence is ILEASGQKVP…LNKLLVELSA (75 aa).

This sequence belongs to the heat shock protein 90 family. As to quaternary structure, homodimer.

The protein resides in the cytoplasm. Functionally, molecular chaperone. Has ATPase activity. The polypeptide is Chaperone protein HtpG (Pseudomonas paraeruginosa (strain DSM 24068 / PA7) (Pseudomonas aeruginosa (strain PA7))).